Reading from the N-terminus, the 151-residue chain is Protein SprT-like (151 aa).

The region spanning 6–147 is the SprT-like domain; the sequence is LQRMVENLSE…GHCNGKLRMK (142 aa). Histidine 67 provides a ligand contact to Zn(2+). Glutamate 68 is an active-site residue. Histidine 71 is a Zn(2+) binding site.

It belongs to the SprT family. Zn(2+) is required as a cofactor.

The protein resides in the cytoplasm. The polypeptide is Protein SprT-like (Staphylococcus aureus (strain Mu3 / ATCC 700698)).